Reading from the N-terminus, the 179-residue chain is MKKHHVDVLISENDVHARIAELGAQITKFYQEKQIDNLVVVGLLRGSFMFMADIVRQINLPVEIEFMTTSSYGTGMTTNHDVRITKDLDGDIKGKHVLIVEDIIDTGYTLEKVRDILNLREPASLTICTLLDKPSRREVEVPVEWVGFEIPDEFVVGYGIDYAQRHRNLGYIGKVVLEE.

The diphosphate site is built by arginine 45 and glycine 46. Glutamate 101 is a GMP binding site. Residue glutamate 101 participates in IMP binding. The Mg(2+) site is built by glutamate 101 and aspartate 102. Aspartate 105 functions as the Proton acceptor in the catalytic mechanism. GMP contacts are provided by residues 105–110 (DTGYTL), lysine 133, and aspartate 161. Residues 105–110 (DTGYTL) and lysine 133 contribute to the IMP site. Arginine 167 serves as a coordination point for diphosphate.

It belongs to the purine/pyrimidine phosphoribosyltransferase family. Homotetramer. It depends on Mg(2+) as a cofactor.

It is found in the cytoplasm. The enzyme catalyses IMP + diphosphate = hypoxanthine + 5-phospho-alpha-D-ribose 1-diphosphate. It catalyses the reaction GMP + diphosphate = guanine + 5-phospho-alpha-D-ribose 1-diphosphate. Its pathway is purine metabolism; IMP biosynthesis via salvage pathway; IMP from hypoxanthine: step 1/1. Purine salvage pathway enzyme which catalyzes the transfer of the ribosyl-5-phosphate group from 5-phospho-alpha-D-ribose 1-diphosphate (PRPP) to the N9 position of hypoxanthine to yield IMP (inosine 5'-monophosphate). To a lesser extent, can also act on guanine leading to GMP, but shows a highly less efficient activity with xanthine. The polypeptide is Hypoxanthine phosphoribosyltransferase (hpt) (Haemophilus influenzae (strain ATCC 51907 / DSM 11121 / KW20 / Rd)).